Reading from the N-terminus, the 205-residue chain is MCKGLAGLPASCLRSAKDMKHRLGFLLQKSDSCEHNSSHNKKDKVIICQRVSQEEVKKWAESLENLISHECGLAAFKAFLKSEYSEENIDFWISCEEYKKIKSPSKLSPKAKKIYNEFISVQASKEVNLDSCTREETSRNMLEPTITCFDEAQKKIFNLMEKDSYRRFLKSRFYLDLVNPSSCGAEKQKGAKSSADCASLVPQCA.

3 S-palmitoyl cysteine lipidation sites follow: C2, C12, and C95. One can recognise an RGS domain in the interval 62–178; that stretch reads SLENLISHEC…LKSRFYLDLV (117 aa).

Post-translationally, palmitoylated on Cys-2 and/or Cys-12. Phosphorylated by cyclic GMP-dependent protein kinase.

Inhibits signal transduction by increasing the GTPase activity of G protein alpha subunits thereby driving them into their inactive GDP-bound form. Activity on G(z)-alpha is inhibited by phosphorylation of the G-protein. Activity on G(z)-alpha and G(i)-alpha-1 is inhibited by palmitoylation of the G-protein. The polypeptide is Regulator of G-protein signaling 4 (RGS4) (Pongo abelii (Sumatran orangutan)).